We begin with the raw amino-acid sequence, 209 residues long: MIGLVGKKVGMTRIFTEDGVSIPVTVIEIEANRVTQVKSLENDGYRAVQVTTGAKKANRVTKPEAGHFAKAGVEAGRGLWEFRLPEGQEFTAGQEISVEIFADVKKVDVTGTSKGKGFAGTVKRWNFRTQDATHGNSLSHRVPGSIGQNQTPGKVFKGKKMAGHLGDERVTVQSLDVVRVDAERNLLLVKGAVPGATGGNLIVKPAVKA.

The segment at 133 to 152 (THGNSLSHRVPGSIGQNQTP) is disordered. The residue at position 150 (glutamine 150) is an N5-methylglutamine.

It belongs to the universal ribosomal protein uL3 family. As to quaternary structure, part of the 50S ribosomal subunit. Forms a cluster with proteins L14 and L19. In terms of processing, methylated by PrmB.

One of the primary rRNA binding proteins, it binds directly near the 3'-end of the 23S rRNA, where it nucleates assembly of the 50S subunit. This is Large ribosomal subunit protein uL3 from Yersinia enterocolitica serotype O:8 / biotype 1B (strain NCTC 13174 / 8081).